The sequence spans 269 residues: Homocitrate synthase subunit alpha (269 aa).

The Pyruvate carboxyltransferase domain maps to 3-255 (INIVDTTLRD…IYTGDFEDII (253 aa)).

It belongs to the alpha-IPM synthase/homocitrate synthase family. Heterodimer of an alpha and an omega chain.

The enzyme catalyses acetyl-CoA + 2-oxoglutarate + H2O = (2R)-homocitrate + CoA + H(+). This protein is a Fe-Mo-cofactor biosynthetic component. The protein is Homocitrate synthase subunit alpha (nifV-ALPHA) of Clostridium pasteurianum.